We begin with the raw amino-acid sequence, 335 residues long: UPF0324 membrane protein LMOf2365_2179 (335 aa).

8 helical membrane-spanning segments follow: residues 10 to 28 (TFWY…SYFL), 33 to 55 (FLMI…ALFP), 91 to 113 (AGWR…VYFL), 123 to 142 (LAIL…VVAI), 155 to 177 (VAAT…IYPI), 251 to 270 (VPWF…FGII), 277 to 299 (FLVI…NVHL), and 309 to 331 (PFAA…VLLF).

Belongs to the UPF0324 family.

It is found in the cell membrane. In Listeria monocytogenes serotype 4b (strain F2365), this protein is UPF0324 membrane protein LMOf2365_2179.